The chain runs to 449 residues: Keratin, type I cuticular Ha7 (449 aa).

The tract at residues 1–104 (MTSFYSTSSC…YGKNTLNGHE (104 aa)) is head. The IF rod domain maps to 104 to 415 (EKETMKFLND…NLLESEDCKL (312 aa)). The interval 105-139 (KETMKFLNDRLANYLEKVRQLEQENAELETTLLER) is coil 1A. A linker 1 region spans residues 140–150 (SKCHESTVCPD). The segment at 151–251 (YQSYFRTIEE…HEQEVKILRS (101 aa)) is coil 1B. Residues 252–267 (QLGEKFRIELDIEPTI) form a linker 12 region. Residues 268 to 411 (DLNRVLGEMR…ATYRNLLESE (144 aa)) form a coil 2 region. The tail stretch occupies residues 416-449 (PCNPCSTPASCTSCPSCGPVTGGSPSGHGASMGR).

This sequence belongs to the intermediate filament family.

The polypeptide is Keratin, type I cuticular Ha7 (KRT37) (Homo sapiens (Human)).